A 222-amino-acid chain; its full sequence is Small ribosomal subunit protein eS1 (222 aa).

It belongs to the eukaryotic ribosomal protein eS1 family.

This chain is Small ribosomal subunit protein eS1, found in Pyrobaculum islandicum (strain DSM 4184 / JCM 9189 / GEO3).